We begin with the raw amino-acid sequence, 152 residues long: RxLR effector protein Avrblb1 (152 aa).

An N-terminal signal peptide occupies residues 1-24; that stretch reads MRSLLLTVLLNLVVLLATTGAVSS. The short motif at 51–72 is the RxLR-dEER element; that stretch reads RSLRGDYNNEVTKEPNTSDEER. The RGD RLK-binding motif signature appears at 54–56; that stretch reads RGD. An N-linked (GlcNAc...) asparagine glycan is attached at Asn-66. The segment at 99 to 152 is w motif; sequence QSKTVLRYEDKLFTALYKSGETPRSLRTKHLDKASASVFFNRFKKWYDKNVGPS.

The protein belongs to the RxLR effector family. Interacts with host defense protein RGA2/Rpi-blb1. Interacts with host legume-type lectin receptor kinase LECRK19.

It localises to the secreted. The protein resides in the host nucleus. Its subcellular location is the host nucleolus. It is found in the host cell membrane. In terms of biological role, secreted effector that acts as an elicitor of hypersensitive response (HR) specifically on plants carrying defense protein RGA2/Rpi-blb1. Enhances P.infestans colonization of plant hosts Nicotiana benthamiana and potato Solanum bulbocastanum leaves. Associates with host legume-type lectin receptor kinases and disrupts attachments between the host plasma membrane and cell wall. This Phytophthora infestans (strain T30-4) (Potato late blight agent) protein is RxLR effector protein Avrblb1.